Consider the following 637-residue polypeptide: MSDGETLADVRIVLIGDEGCGKTSLVMSLLEDEWVDAVPRRLDRVLIPADVTPENVTTSIVDLSIKEEEDNWLISEMRQANVICVVYSVTDDTTVERIQEKWLPLIRQAFGEYHETPIILVGNKSDGTANNTDKLPSGQSLVSSLQILPIMEANTEVETCVECSARTMKNVSEIFYYAQKAVIYPTRPLYDADTKQLTDRAKKALIRVFKICDRDNDGYLSDTELNDFQKLCFGIPLTSTALEDVKRAVADGCPDGVASDALMLAGFLYLHLLFIERGRHETTWAVLRKFGYETSLKLAEEYLYPRITIPVGCSTELSPEGVQFVSALFEKYDEDKDGCLSPSELQNLFSVCSAPVITKDNILALETNQRGWLTYNGYMAYWNMTTLINLTQTFEQLAYLGFPVGRSGPGRAGNTLDSIRVTRERKKDLENHGTDRKVFQCLVVGAKDAGKTVFMQSLAGRGMSDVAQIGRRHSPFVINRVKVKEESKYLLLREVDVLSPQDALGSGETSADVVAFLYDVSNPDSFAFCATVYQKYFYRTKTPCVMIATKVEREEVDQRWEIPPEEFCKQFELPKPIKFSSSNIGQSNSPIFEQLAMMAVYPHLRRVFYLSDSNLLSKITFGAAIVALAGFLVLKNL.

Residues 1 to 613 are Cytoplasmic-facing; the sequence is MSDGETLADV…LRRVFYLSDS (613 aa). The Miro 1 domain occupies 7-184; sequence LADVRIVLIG…FYYAQKAVIY (178 aa). Residues 28 to 35, 74 to 78, and 135 to 138 contribute to the GTP site; these read SLLEDEWV, ISEMR, and LPSG. EF-hand domains lie at 200–235 and 320–355; these read RAKK…CFGI and EGVQ…CSAP. Ca(2+)-binding residues include aspartate 213, aspartate 215, aspartate 217, tyrosine 219, glutamate 224, aspartate 333, aspartate 335, aspartate 337, cysteine 339, and glutamate 344. One can recognise a Miro 2 domain in the interval 436–601; sequence RKVFQCLVVG…FEQLAMMAVY (166 aa). Residues 445–452, 482–486, and 549–552 each bind GTP; these read GAKDAGKT, KVKEE, and TKVE. A helical; Anchor for type IV membrane protein membrane pass occupies residues 614-634; it reads NLLSKITFGAAIVALAGFLVL. At 635–637 the chain is on the mitochondrial intermembrane side; sequence KNL.

Belongs to the mitochondrial Rho GTPase family.

It localises to the mitochondrion outer membrane. Its function is as follows. Mitochondrial GTPase involved in mitochondrial trafficking. Probably involved in control of anterograde transport of mitochondria and their subcellular distribution. In Caenorhabditis briggsae, this protein is Mitochondrial Rho GTPase 1.